Consider the following 71-residue polypeptide: Large ribosomal subunit protein uL29 (71 aa).

The protein belongs to the universal ribosomal protein uL29 family.

This Rickettsia africae (strain ESF-5) protein is Large ribosomal subunit protein uL29.